Here is a 184-residue protein sequence, read N- to C-terminus: MKIGVLALQGAVREHIRHIELSGHEGIAVKKVEQLDEIDGLILPGGESTTLRRLMDLYGFKEKLQQSDLPIFGTCAGLIVLAKDVEGETGYLKKLDITVERNSFGRQVDSFEAELDIKGIAEDIEGVFIRAPHIANVEEGVEILSTVGDKIVAVKQGKYLGVSFHPELTDDYRVTQYFIDHMVK.

46–48 is a binding site for L-glutamine; sequence GES. Cysteine 75 (nucleophile) is an active-site residue. L-glutamine is bound by residues arginine 101 and 129–130; that span reads IR. Catalysis depends on charge relay system residues histidine 165 and glutamate 167.

The protein belongs to the glutaminase PdxT/SNO family. As to quaternary structure, in the presence of PdxS, forms a dodecamer of heterodimers. Only shows activity in the heterodimer.

The enzyme catalyses aldehydo-D-ribose 5-phosphate + D-glyceraldehyde 3-phosphate + L-glutamine = pyridoxal 5'-phosphate + L-glutamate + phosphate + 3 H2O + H(+). The catalysed reaction is L-glutamine + H2O = L-glutamate + NH4(+). It participates in cofactor biosynthesis; pyridoxal 5'-phosphate biosynthesis. Catalyzes the hydrolysis of glutamine to glutamate and ammonia as part of the biosynthesis of pyridoxal 5'-phosphate. The resulting ammonia molecule is channeled to the active site of PdxS. This is Pyridoxal 5'-phosphate synthase subunit PdxT from Staphylococcus haemolyticus (strain JCSC1435).